Consider the following 211-residue polypeptide: Secreted phosphoprotein 24 (211 aa).

The first 29 residues, Met-1 to Gly-29, serve as a signal peptide directing secretion. Intrachain disulfides connect Cys-92–Cys-103 and Cys-116–Cys-134. At Ser-96 the chain carries Phosphoserine. Residues Ser-145, Ser-146, Ser-170, Ser-173, and Ser-182 each carry the phosphoserine modification.

The protein belongs to the SPP2 family. In terms of processing, phosphorylation sites are present in the extracellular medium. In terms of tissue distribution, detected in liver and plasma.

It localises to the secreted. Functionally, could coordinate an aspect of bone turnover. The chain is Secreted phosphoprotein 24 (SPP2) from Homo sapiens (Human).